The sequence spans 84 residues: Cell division topological specificity factor (84 aa).

Belongs to the MinE family.

Its function is as follows. Prevents the cell division inhibition by proteins MinC and MinD at internal division sites while permitting inhibition at polar sites. This ensures cell division at the proper site by restricting the formation of a division septum at the midpoint of the long axis of the cell. The sequence is that of Cell division topological specificity factor from Granulibacter bethesdensis (strain ATCC BAA-1260 / CGDNIH1).